Here is a 248-residue protein sequence, read N- to C-terminus: Acetoacetyl-CoA reductase (248 aa).

Residues 14-16, arginine 42, and 90-94 each bind NADP(+); these read GGI and NAGIT. Residues aspartate 96 and 149-152 each bind substrate; that span reads QFGQ. Tyrosine 155 (proton acceptor) is an active-site residue. 185–188 is a binding site for NADP(+); that stretch reads PGYT. Substrate contacts are provided by residues 186 to 187 and arginine 197; that span reads GY.

Belongs to the short-chain dehydrogenases/reductases (SDR) family.

It is found in the cytoplasm. It carries out the reaction a (3R)-3-hydroxyacyl-CoA + NADP(+) = a 3-oxoacyl-CoA + NADPH + H(+). It participates in biopolymer metabolism; poly-(R)-3-hydroxybutanoate biosynthesis. The chain is Acetoacetyl-CoA reductase (phaB) from Acinetobacter sp. (strain RA3849).